We begin with the raw amino-acid sequence, 265 residues long: tRNA (guanine-N(7)-)-methyltransferase (265 aa).

A compositionally biased stretch (basic and acidic residues) spans 1–16 (MNHDDPNASGVPHDDA). Positions 1–40 (MNHDDPNASGVPHDDANDAAPASASDAARATGHADDESSP) are disordered. Over residues 18-31 (DAAPASASDAARAT) the composition is skewed to low complexity. Residues Glu95, Glu120, Asp147, and Asp170 each coordinate S-adenosyl-L-methionine. Asp170 is a catalytic residue. Residues Lys174, Asp206, and 241–244 (TKFE) each bind substrate.

It belongs to the class I-like SAM-binding methyltransferase superfamily. TrmB family.

The enzyme catalyses guanosine(46) in tRNA + S-adenosyl-L-methionine = N(7)-methylguanosine(46) in tRNA + S-adenosyl-L-homocysteine. The protein operates within tRNA modification; N(7)-methylguanine-tRNA biosynthesis. Catalyzes the formation of N(7)-methylguanine at position 46 (m7G46) in tRNA. The sequence is that of tRNA (guanine-N(7)-)-methyltransferase from Burkholderia thailandensis (strain ATCC 700388 / DSM 13276 / CCUG 48851 / CIP 106301 / E264).